Here is a 544-residue protein sequence, read N- to C-terminus: Serine/threonine-protein kinase PAK 1 (544 aa).

Positions 1-77 are disordered; sequence MSNNGLDIQD…KEKERPEISL (77 aa). The residue at position 2 (S2) is an N-acetylserine. Residue S21 is modified to Phosphoserine; by PKB and autocatalysis. Residues 68–77 show a composition bias toward basic and acidic residues; it reads KEKERPEISL. The segment at 70–140 is autoregulatory region; sequence KERPEISLPS…YNSKKTSNSQ (71 aa). Residues 75–88 form the CRIB domain; sequence ISLPSDFEHTIHVG. Residues 75–105 are GTPase-binding; the sequence is ISLPSDFEHTIHVGFDAVTGEFTGMPEQWAR. Phosphothreonine; by OXSR1 is present on T84. The residue at position 115 (S115) is a Phosphoserine. A phosphotyrosine mark is found at Y131 and Y142. Phosphoserine; by autocatalysis is present on residues S144 and S149. Y153 carries the phosphotyrosine; by JAK2 modification. The tract at residues 161–193 is disordered; that stretch reads VKAVSETPAVPPVSEDEDDDDDGTPPPVIAPRP. S174 carries the post-translational modification Phosphoserine. Positions 174-183 are enriched in acidic residues; sequence SEDEDDDDDG. Phosphothreonine is present on T184. Residue S198 is modified to Phosphoserine; by autocatalysis. At Y200 the chain carries Phosphotyrosine; by JAK2. Residue S203 is modified to Phosphoserine; by autocatalysis. T211 and T218 each carry phosphothreonine. The segment at 212 to 250 is disordered; the sequence is PTRDVATSPISPTENNTTPPDALTRNTEKQKKKPKMSDE. S219 and S222 each carry phosphoserine. The span at 219–230 shows a compositional bias: polar residues; sequence SPISPTENNTTP. 3 positions are modified to phosphothreonine: T224, T228, and T229. In terms of domain architecture, Protein kinase spans 269–520; that stretch reads YTRFEKIGQG…AKELLQHQFL (252 aa). 275-283 provides a ligand contact to ATP; that stretch reads IGQGASGTV. A Phosphotyrosine; by JAK2 modification is found at Y284. K298 lines the ATP pocket. Residue D388 is the Proton acceptor of the active site. T422 carries the phosphothreonine; by autocatalysis, BRSK2 and PDPK1 modification.

The protein belongs to the protein kinase superfamily. STE Ser/Thr protein kinase family. STE20 subfamily. Homodimer in its autoinhibited state. Active as monomer. Interacts with GIT1. Component of cytoplasmic complexes, which also contains PXN, ARHGEF7 and GIT1. Interacts with NISCH. Interacts with DVL1; mediates the formation of a DVL1, MUSK and PAK1 ternary complex involved in AChR clustering. Binds to the caspase-cleaved p110 isoform of CDC2L1 and CDC2L2, p110C, but not the full-length proteins. Interacts with ARHGEF7. Interacts tightly with GTP-bound but not GDP-bound CDC42/P21 and RAC1. Probably found in a ternary complex composed of DSCAM, PAK1 and RAC1. Interacts with DSCAM (via cytoplasmic domain); the interaction is direct and enhanced in presence of RAC1. Interacts with SCRIB. Interacts with PDPK1. Interacts (via kinase domain) with RAF1. Interacts with NCK1 and NCK2. Interacts with TBCB. Interacts with BRSK2. Interacts with SNAI1. Interacts with CIB1 (via N-terminal region); the interaction is direct, promotes PAK1 activity and occurs in a calcium-dependent manner. Interacts with INPP5K. Interacts with gamma-tubulin. Interacts with RHOU; the interaction promotes PAK1 activation. It depends on Mg(2+) as a cofactor. Autophosphorylated in trans, meaning that in a dimer, one kinase molecule phosphorylates the other one. Activated by autophosphorylation at Thr-422 in response to a conformation change, triggered by interaction with GTP-bound CDC42 or RAC1. Activated by phosphorylation at Thr-422 by BRSK2 and by PDPK1. Phosphorylated by JAK2 in response to PRL; this increases PAK1 kinase activity. Phosphorylated at Ser-21 by PKB/AKT; this reduces interaction with NCK1 and association with focal adhesion sites. Upon DNA damage, phosphorylated at Thr-211 and translocates to the nucleoplasm. Phosphorylated at tyrosine residues, which can be enhanced by NTN1.

The protein resides in the cytoplasm. The protein localises to the cell junction. It localises to the focal adhesion. It is found in the cell projection. Its subcellular location is the lamellipodium. The protein resides in the cell membrane. The protein localises to the ruffle membrane. It localises to the invadopodium. It is found in the nucleus. Its subcellular location is the nucleoplasm. The protein resides in the chromosome. The protein localises to the cytoskeleton. It localises to the microtubule organizing center. It is found in the centrosome. The catalysed reaction is L-seryl-[protein] + ATP = O-phospho-L-seryl-[protein] + ADP + H(+). The enzyme catalyses L-threonyl-[protein] + ATP = O-phospho-L-threonyl-[protein] + ADP + H(+). With respect to regulation, phosphorylation of Thr-84 by OXSR1 inhibits activation. Activated by binding small G proteins. Binding of GTP-bound CDC42 or RAC1 to the autoregulatory region releases monomers from the autoinhibited dimer, and enables activation by phosphorylation of Thr-422. In terms of biological role, protein kinase involved in intracellular signaling pathways downstream of integrins and receptor-type kinases that plays an important role in cytoskeleton dynamics, in cell adhesion, migration, proliferation, apoptosis, mitosis, and in vesicle-mediated transport processes. Can directly phosphorylate BAD and protects cells against apoptosis. Activated by interaction with CDC42 and RAC1. Functions as a GTPase effector that links the Rho-related GTPases CDC42 and RAC1 to the JNK MAP kinase pathway. Phosphorylates and activates MAP2K1, and thereby mediates activation of downstream MAP kinases. Involved in the reorganization of the actin cytoskeleton, actin stress fibers and of focal adhesion complexes. Phosphorylates the tubulin chaperone TBCB and thereby plays a role in the regulation of microtubule biogenesis and organization of the tubulin cytoskeleton. Plays a role in the regulation of insulin secretion in response to elevated glucose levels. Part of a ternary complex that contains PAK1, DVL1 and MUSK that is important for MUSK-dependent regulation of AChR clustering during the formation of the neuromuscular junction (NMJ). Activity is inhibited in cells undergoing apoptosis, potentially due to binding of CDC2L1 and CDC2L2. Phosphorylates MYL9/MLC2. Phosphorylates RAF1 at 'Ser-338' and 'Ser-339' resulting in: activation of RAF1, stimulation of RAF1 translocation to mitochondria, phosphorylation of BAD by RAF1, and RAF1 binding to BCL2. Phosphorylates SNAI1 at 'Ser-246' promoting its transcriptional repressor activity by increasing its accumulation in the nucleus. In podocytes, promotes NR3C2 nuclear localization. Required for atypical chemokine receptor ACKR2-induced phosphorylation of LIMK1 and cofilin (CFL1) and for the up-regulation of ACKR2 from endosomal compartment to cell membrane, increasing its efficiency in chemokine uptake and degradation. In synapses, seems to mediate the regulation of F-actin cluster formation performed by SHANK3, maybe through CFL1 phosphorylation and inactivation. Plays a role in RUFY3-mediated facilitating gastric cancer cells migration and invasion. In response to DNA damage, phosphorylates MORC2 which activates its ATPase activity and facilitates chromatin remodeling. In neurons, plays a crucial role in regulating GABA(A) receptor synaptic stability and hence GABAergic inhibitory synaptic transmission through its role in F-actin stabilization. In hippocampal neurons, necessary for the formation of dendritic spines and excitatory synapses; this function is dependent on kinase activity and may be exerted by the regulation of actomyosin contractility through the phosphorylation of myosin II regulatory light chain (MLC). Along with GIT1, positively regulates microtubule nucleation during interphase. Phosphorylates FXR1, promoting its localization to stress granules and activity. Phosphorylates ILK on 'Thr-173' and 'Ser-246', promoting nuclear export of ILK. This Bos taurus (Bovine) protein is Serine/threonine-protein kinase PAK 1.